The sequence spans 308 residues: Apolipoprotein E (308 aa).

The N-terminal stretch at 1–18 is a signal peptide; that stretch reads MKFLWAALVVTLLAGCQA. A run of 8 repeats spans residues 75 to 96, 97 to 118, 119 to 140, 141 to 162, 163 to 184, 185 to 206, 207 to 224, and 225 to 246. The 8 X 22 AA approximate tandem repeats stretch occupies residues 75–246; sequence LLIEETMKEV…RLDDVRDQME (172 aa). An LDL and other lipoprotein receptors binding region spans residues 153-163; it reads HLRKLRKRLLR. Residue 157 to 160 participates in heparin binding; it reads LRKR. Residues 205 to 281 form a lipid-binding and lipoprotein association region; it reads AIPPSQQLRE…SWFEPLVQDM (77 aa). Residue 220–227 coordinates heparin; sequence GQKVRGRL. The segment at 257 to 308 is homooligomerization; that stretch reads SQVRLQAEAFQTRLKSWFEPLVQDMQRQWASLVEKVQSSLGISPSTKPSKTK. The specificity for association with VLDL stretch occupies residues 269 to 281; that stretch reads RLKSWFEPLVQDM.

This sequence belongs to the apolipoprotein A1/A4/E family. Homotetramer. May interact with ABCA1; functionally associated with ABCA1 in the biogenesis of HDLs. May interact with APP/A4 amyloid-beta peptide; the interaction is extremely stable in vitro but its physiological significance is unclear. May interact with MAPT. May interact with MAP2. In the cerebrospinal fluid, interacts with secreted SORL1. Interacts with PMEL; this allows the loading of PMEL luminal fragment on ILVs to induce fibril nucleation. Post-translationally, APOE exists as multiple glycosylated and sialylated glycoforms within cells and in plasma. The extent of glycosylation and sialylation are tissue and context specific. Glycated in plasma VLDL. In terms of processing, phosphorylated by FAM20C in the extracellular medium.

It is found in the secreted. The protein resides in the extracellular space. The protein localises to the extracellular matrix. It localises to the extracellular vesicle. Its subcellular location is the endosome. It is found in the multivesicular body. APOE is an apolipoprotein, a protein associating with lipid particles, that mainly functions in lipoprotein-mediated lipid transport between organs via the plasma and interstitial fluids. APOE is a core component of plasma lipoproteins and is involved in their production, conversion and clearance. Apolipoproteins are amphipathic molecules that interact both with lipids of the lipoprotein particle core and the aqueous environment of the plasma. As such, APOE associates with chylomicrons, chylomicron remnants, very low density lipoproteins (VLDL) and intermediate density lipoproteins (IDL) but shows a preferential binding to high-density lipoproteins (HDL). It also binds a wide range of cellular receptors including the LDL receptor/LDLR and the very low-density lipoprotein receptor/VLDLR that mediate the cellular uptake of the APOE-containing lipoprotein particles. Finally, APOE also has a heparin-binding activity and binds heparan-sulfate proteoglycans on the surface of cells, a property that supports the capture and the receptor-mediated uptake of APOE-containing lipoproteins by cells. The protein is Apolipoprotein E (APOE) of Pteropus alecto (Black flying fox).